Consider the following 729-residue polypeptide: Adenosylcobalamin-dependent ribonucleoside-triphosphate reductase (729 aa).

Residues Cys-189 and Cys-438 are joined by a disulfide bond. Active-site residues include Cys-427 and Glu-429.

The protein belongs to the class II ribonucleoside-triphosphate reductase family. In terms of assembly, monomer. Adenosylcob(III)alamin is required as a cofactor.

The enzyme catalyses a 2'-deoxyribonucleoside 5'-triphosphate + [thioredoxin]-disulfide + H2O = a ribonucleoside 5'-triphosphate + [thioredoxin]-dithiol. This chain is Adenosylcobalamin-dependent ribonucleoside-triphosphate reductase (rnr), found in Euglena gracilis.